Consider the following 494-residue polypeptide: Solute carrier family 2, facilitated glucose transporter member 3 (494 aa).

Residues 1–10 are Cytoplasmic-facing; that stretch reads MGTTKVTTPL. A helical transmembrane segment spans residues 11-32; the sequence is IFAISIATIGSFQFGYNTGVIN. Over 33–64 the chain is Extracellular; that stretch reads APEAIIKDFLNYTLEERSETPPSSVLLTSLWS. N-linked (GlcNAc...) asparagine glycosylation occurs at Asn43. The chain crosses the membrane as a helical span at residues 65–85; that stretch reads LSVAIFSVGGMIGSFSVGLFV. Over 86–90 the chain is Cytoplasmic; sequence NRFGR. Residues 91-111 form a helical membrane-spanning segment; it reads RNSMLIVNLLAIAGGCLMGFC. Over 112-118 the chain is Extracellular; it reads KIAESVE. A helical transmembrane segment spans residues 119–142; that stretch reads MLILGRLIIGLFCGLCTGFVPMYI. At 143 to 153 the chain is on the cytoplasmic side; the sequence is GEISPTALRGA. A helical membrane pass occupies residues 154-174; it reads FGTLNQLGIVIGILVAQIFGL. Gln159 contributes to the D-glucose binding site. Residues 175–183 are Extracellular-facing; sequence KVILGTEDL. The helical transmembrane segment at 184–204 threads the bilayer; sequence WPLLLGFTILPAIIQCAALPF. At 205–269 the chain is on the cytoplasmic side; the sequence is CPESPRFLLI…LFRAPNYRQP (65 aa). Phosphothreonine is present on Thr232. Residues 270–290 traverse the membrane as a helical segment; sequence IIISIMLQLSQQLSGINAVFY. The important for selectivity against fructose stretch occupies residues 277–279; the sequence is QLS. D-glucose contacts are provided by residues 280–281 and Asn286; that span reads QQ. The Extracellular portion of the chain corresponds to 291 to 304; sequence YSTGIFKDAGVQEP. Residues 305 to 325 form a helical membrane-spanning segment; it reads VYATIGAGVVNTIFTVVSVFL. Asn315 provides a ligand contact to D-glucose. The Cytoplasmic segment spans residues 326–331; the sequence is VERAGR. Residues 332–352 form a helical membrane-spanning segment; sequence RTLHLIGLGGMAFCSILMTIS. The Extracellular segment spans residues 353–363; that stretch reads LLLKDNYSWMS. A helical transmembrane segment spans residues 364–389; it reads FICIGAILVFVAFFEIGPGPIPWFIV. D-glucose contacts are provided by Glu378 and Trp386. Residues 390–399 lie on the Cytoplasmic side of the membrane; it reads AELFGQGPRP. A helical transmembrane segment spans residues 400–420; it reads AAMAVAGCSNWTSNFLVGLLF. Over 421 to 429 the chain is Extracellular; the sequence is PSATFYLGA. A helical membrane pass occupies residues 430–450; that stretch reads YVFIVFTVFLVIFWVFTFFKV. At 451-494 the chain is on the cytoplasmic side; it reads PETRGRTFEEITRAFEGQVQTGTRGEKGPIMEMNSIQPTKDTNA. A disordered region spans residues 473–494; sequence TRGEKGPIMEMNSIQPTKDTNA. Positions 484 to 494 are enriched in polar residues; sequence NSIQPTKDTNA. Phosphoserine is present on Ser485. Position 492 is a phosphothreonine (Thr492).

The protein belongs to the major facilitator superfamily. Sugar transporter (TC 2.A.1.1) family. Glucose transporter subfamily. In terms of assembly, interacts with SMIM43; the interaction may promote SLC2A3-mediated glucose transport to meet the energy needs of mesendoderm differentiation. As to expression, detected in placenta.

It localises to the cell membrane. Its subcellular location is the perikaryon. It is found in the cell projection. It catalyses the reaction D-glucose(out) = D-glucose(in). The enzyme catalyses D-galactose(in) = D-galactose(out). Its activity is regulated as follows. Deoxyglucose transport is inhibited by D-glucose, D-galactose and maltose. Galactose transport is inhibited by D-glucose and maltose. Functionally, facilitative glucose transporter. Can also mediate the uptake of various other monosaccharides across the cell membrane. Mediates the uptake of glucose, 2-deoxyglucose, galactose, mannose, xylose and fucose, and probably also dehydroascorbate. Does not mediate fructose transport. Required for mesendoderm differentiation. This chain is Solute carrier family 2, facilitated glucose transporter member 3, found in Ovis aries (Sheep).